Here is a 75-residue protein sequence, read N- to C-terminus: UPF0352 protein CKO_00587 (75 aa).

It belongs to the UPF0352 family.

In Citrobacter koseri (strain ATCC BAA-895 / CDC 4225-83 / SGSC4696), this protein is UPF0352 protein CKO_00587.